Reading from the N-terminus, the 193-residue chain is Ribosome maturation factor RimM (193 aa).

The PRC barrel domain occupies 97–172 (DDEFYLTDLV…LILADPPALV (76 aa)). The interval 168 to 193 (PPALVGDHEGPEEKGLDENEELGDRD) is disordered. Over residues 173–193 (GDHEGPEEKGLDENEELGDRD) the composition is skewed to basic and acidic residues.

The protein belongs to the RimM family. In terms of assembly, binds ribosomal protein uS19.

It is found in the cytoplasm. Functionally, an accessory protein needed during the final step in the assembly of 30S ribosomal subunit, possibly for assembly of the head region. Essential for efficient processing of 16S rRNA. May be needed both before and after RbfA during the maturation of 16S rRNA. It has affinity for free ribosomal 30S subunits but not for 70S ribosomes. The polypeptide is Ribosome maturation factor RimM (Caulobacter vibrioides (strain ATCC 19089 / CIP 103742 / CB 15) (Caulobacter crescentus)).